The sequence spans 440 residues: Thymidine phosphorylase (440 aa).

The protein belongs to the thymidine/pyrimidine-nucleoside phosphorylase family. In terms of assembly, homodimer.

It carries out the reaction thymidine + phosphate = 2-deoxy-alpha-D-ribose 1-phosphate + thymine. Its pathway is pyrimidine metabolism; dTMP biosynthesis via salvage pathway; dTMP from thymine: step 1/2. In terms of biological role, the enzymes which catalyze the reversible phosphorolysis of pyrimidine nucleosides are involved in the degradation of these compounds and in their utilization as carbon and energy sources, or in the rescue of pyrimidine bases for nucleotide synthesis. This Klebsiella pneumoniae (strain 342) protein is Thymidine phosphorylase.